The chain runs to 423 residues: Aspartate aminotransferase, mitochondrial (423 aa).

The transit peptide at 1 to 22 (MALLQSRLLLSAPRRAAATARA) directs the protein to the mitochondrion. Positions 58, 155, and 208 each coordinate substrate. Position 272 is an N6-(pyridoxal phosphate)lysine (Lys272). A substrate-binding site is contributed by Arg400.

The protein belongs to the class-I pyridoxal-phosphate-dependent aminotransferase family. In terms of assembly, homodimer. Pyridoxal 5'-phosphate is required as a cofactor. In terms of tissue distribution, detected in heart (at protein level).

It localises to the mitochondrion matrix. It carries out the reaction L-aspartate + 2-oxoglutarate = oxaloacetate + L-glutamate. It catalyses the reaction L-kynurenine + 2-oxoglutarate = kynurenate + L-glutamate + H2O. In terms of biological role, catalyzes the irreversible transamination of the L-tryptophan metabolite L-kynurenine to form kynurenic acid (KA). As a member of the malate-aspartate shuttle, it has a key role in the intracellular NAD(H) redox balance. Is important for metabolite exchange between mitochondria and cytosol, and for amino acid metabolism. This chain is Aspartate aminotransferase, mitochondrial (GOT2), found in Gallus gallus (Chicken).